We begin with the raw amino-acid sequence, 289 residues long: Acetyl-coenzyme A carboxylase carboxyl transferase subunit beta (289 aa).

One can recognise a CoA carboxyltransferase N-terminal domain in the interval 34 to 289 (MWVKCNKCGE…KLINMHQNSF (256 aa)). Zn(2+)-binding residues include Cys38, Cys41, Cys57, and Cys60. The C4-type zinc-finger motif lies at 38–60 (CNKCGEILYQNDLEKNYMVCNLC).

The protein belongs to the AccD/PCCB family. In terms of assembly, acetyl-CoA carboxylase is a heterohexamer composed of biotin carboxyl carrier protein (AccB), biotin carboxylase (AccC) and two subunits each of ACCase subunit alpha (AccA) and ACCase subunit beta (AccD). Zn(2+) is required as a cofactor.

It localises to the cytoplasm. The catalysed reaction is N(6)-carboxybiotinyl-L-lysyl-[protein] + acetyl-CoA = N(6)-biotinyl-L-lysyl-[protein] + malonyl-CoA. It participates in lipid metabolism; malonyl-CoA biosynthesis; malonyl-CoA from acetyl-CoA: step 1/1. Its function is as follows. Component of the acetyl coenzyme A carboxylase (ACC) complex. Biotin carboxylase (BC) catalyzes the carboxylation of biotin on its carrier protein (BCCP) and then the CO(2) group is transferred by the transcarboxylase to acetyl-CoA to form malonyl-CoA. The protein is Acetyl-coenzyme A carboxylase carboxyl transferase subunit beta of Clostridium botulinum (strain Okra / Type B1).